The chain runs to 872 residues: Alanine--tRNA ligase (872 aa).

Zn(2+) is bound by residues His-567, His-571, Cys-669, and His-673.

Belongs to the class-II aminoacyl-tRNA synthetase family. Requires Zn(2+) as cofactor.

Its subcellular location is the cytoplasm. The catalysed reaction is tRNA(Ala) + L-alanine + ATP = L-alanyl-tRNA(Ala) + AMP + diphosphate. Functionally, catalyzes the attachment of alanine to tRNA(Ala) in a two-step reaction: alanine is first activated by ATP to form Ala-AMP and then transferred to the acceptor end of tRNA(Ala). Also edits incorrectly charged Ser-tRNA(Ala) and Gly-tRNA(Ala) via its editing domain. This chain is Alanine--tRNA ligase, found in Streptococcus pyogenes serotype M6 (strain ATCC BAA-946 / MGAS10394).